We begin with the raw amino-acid sequence, 398 residues long: Odorant receptor 24a (398 aa).

Topologically, residues 1 to 14 (MLPRFLTASYPMER) are cytoplasmic. Residues 15–31 (HYFMVPKFALSLIGFYP) form a helical membrane-spanning segment. The Extracellular portion of the chain corresponds to 32 to 46 (EQKRTVLVKLWSFFN). A helical membrane pass occupies residues 47-67 (FFILTYGCYAEAYYGIHYIPI). The Cytoplasmic portion of the chain corresponds to 68 to 74 (NIATALD). The helical transmembrane segment at 75–95 (ALCPVASSILSLVKMVAIWWY) threads the bilayer. Residues 96–124 (QDELRSLIERVRFLTEQQKSKRKLGYKKR) lie on the Extracellular side of the membrane. Residues 125-145 (FYTLATQLTFLLLCCGFCTST) form a helical membrane-spanning segment. Over 146-199 (SYSVRHLIDNILRRTHGKDWIYETPFKMMFPDLLLRLPLYPITYILVHWHGYIT) the chain is Cytoplasmic. The helical transmembrane segment at 200 to 220 (VVCFVGADGFFLGFCLYFTVL) threads the bilayer. The Extracellular portion of the chain corresponds to 221–269 (LLCLQDDVCDLLEVENIEKSPSEAEEARIVREMEKLVDRHNEVAELTER). A helical transmembrane segment spans residues 270–290 (LSGVMVEITLAHFVTSSLIIG). Residues 291-295 (TSVVD) lie on the Cytoplasmic side of the membrane. A helical membrane pass occupies residues 296 to 316 (ILLFSGLGIIVYVVYTCAVGV). The Extracellular segment spans residues 317 to 398 (EIFLYCLGGS…SLIALAKSVI (82 aa)).

The protein belongs to the insect chemoreceptor superfamily. Heteromeric odorant receptor channel (TC 1.A.69) family. Or1a subfamily. Interacts with Orco. Complexes exist early in the endomembrane system in olfactory sensory neurons (OSNs), coupling these complexes to the conserved ciliary trafficking pathway. Not expressed in either the antenna or maxillary palp.

It is found in the cell membrane. Functionally, odorant receptor which mediates acceptance or avoidance behavior, depending on its substrates. The odorant receptor repertoire encodes a large collection of odor stimuli that vary widely in identity, intensity, and duration. May form a complex with Orco to form odorant-sensing units, providing sensitive and prolonged odorant signaling and calcium permeability. Involved in the behavioral responses to pentanol, hexanol, octanol, nonanol, propyl acetate, butyl acetate, isoamyl acetate, methyl caproate, anisole, heptanal, 2-heptanone, r-carvone, and nonanoic acid. Also responds to pyrazines. This Drosophila melanogaster (Fruit fly) protein is Odorant receptor 24a (Or24a).